A 368-amino-acid chain; its full sequence is MTPRRCLIAAGGTGGHMFPARAAAEALIARGWQVRLVTDARGLRHATDFPAVAVDEIHAASPSTKNPLKLARAALELTQGFAQARSIVGKWKPDVIAGFGGYPAFPALAVARSMGIAFAIHEQNAVLGRVNRVFAAKAGFVASGFERLDRLPAKAKKRHILTGNPLRAPILAARDAGYPAIDADGRLNILVLGGSLGARILSETVPQALAMVPEKLRSRLDVVQQTREESLPMARETYQAAGIAAQCEPFFEDVGSLYAASHLVIGRAGASTVSEVAGVGRPAIFCPLAIAADDHQSANVDGLVQAVACDVVHEGEFTAQKIAALIETRLSNPDDLASRAQSARALGRPDAADALARAVDGLVTGALV.

UDP-N-acetyl-alpha-D-glucosamine contacts are provided by residues 13 to 15, asparagine 124, arginine 167, serine 195, and glutamine 296; that span reads TGG.

The protein belongs to the glycosyltransferase 28 family. MurG subfamily.

It is found in the cell inner membrane. It catalyses the reaction di-trans,octa-cis-undecaprenyl diphospho-N-acetyl-alpha-D-muramoyl-L-alanyl-D-glutamyl-meso-2,6-diaminopimeloyl-D-alanyl-D-alanine + UDP-N-acetyl-alpha-D-glucosamine = di-trans,octa-cis-undecaprenyl diphospho-[N-acetyl-alpha-D-glucosaminyl-(1-&gt;4)]-N-acetyl-alpha-D-muramoyl-L-alanyl-D-glutamyl-meso-2,6-diaminopimeloyl-D-alanyl-D-alanine + UDP + H(+). The protein operates within cell wall biogenesis; peptidoglycan biosynthesis. In terms of biological role, cell wall formation. Catalyzes the transfer of a GlcNAc subunit on undecaprenyl-pyrophosphoryl-MurNAc-pentapeptide (lipid intermediate I) to form undecaprenyl-pyrophosphoryl-MurNAc-(pentapeptide)GlcNAc (lipid intermediate II). This chain is UDP-N-acetylglucosamine--N-acetylmuramyl-(pentapeptide) pyrophosphoryl-undecaprenol N-acetylglucosamine transferase, found in Maricaulis maris (strain MCS10) (Caulobacter maris).